Consider the following 113-residue polypeptide: Large ribosomal subunit protein bL19 (113 aa).

Belongs to the bacterial ribosomal protein bL19 family.

Its function is as follows. This protein is located at the 30S-50S ribosomal subunit interface and may play a role in the structure and function of the aminoacyl-tRNA binding site. The sequence is that of Large ribosomal subunit protein bL19 from Corynebacterium diphtheriae (strain ATCC 700971 / NCTC 13129 / Biotype gravis).